The sequence spans 114 residues: Large ribosomal subunit protein bL19 (114 aa).

Belongs to the bacterial ribosomal protein bL19 family.

Functionally, this protein is located at the 30S-50S ribosomal subunit interface and may play a role in the structure and function of the aminoacyl-tRNA binding site. The chain is Large ribosomal subunit protein bL19 from Bacillus cytotoxicus (strain DSM 22905 / CIP 110041 / 391-98 / NVH 391-98).